A 54-amino-acid polypeptide reads, in one-letter code: Conotoxin vc5a (54 aa).

An N-terminal signal peptide occupies residues 1-14 (VILLLITSTPSVDA). A propeptide spanning residues 15-42 (RLKAKDNMPLASFHDNAKRTLQTRLINT) is cleaved from the precursor. 4-hydroxyproline is present on P49. I53 carries the isoleucine amide modification.

The protein belongs to the conotoxin T superfamily. Post-translationally, contains 2 disulfide bonds that can be either 'C1-C3, C2-C4' or 'C1-C4, C2-C3', since these disulfide connectivities have been observed for conotoxins with cysteine framework V (for examples, see AC P0DQQ7 and AC P81755). Expressed by the venom duct.

It is found in the secreted. This chain is Conotoxin vc5a, found in Conus victoriae (Queen Victoria cone).